Reading from the N-terminus, the 505-residue chain is 2,3-bisphosphoglycerate-independent phosphoglycerate mutase (505 aa).

Mn(2+) is bound by residues D15 and S65. S65 (phosphoserine intermediate) is an active-site residue. Substrate is bound by residues H126, 156–157, R187, R193, 260–263, and K333; these read RD and RPDR. Residues D398, H402, D439, H440, and H457 each contribute to the Mn(2+) site.

The protein belongs to the BPG-independent phosphoglycerate mutase family. In terms of assembly, monomer. Mn(2+) serves as cofactor.

It carries out the reaction (2R)-2-phosphoglycerate = (2R)-3-phosphoglycerate. It participates in carbohydrate degradation; glycolysis; pyruvate from D-glyceraldehyde 3-phosphate: step 3/5. Functionally, catalyzes the interconversion of 2-phosphoglycerate and 3-phosphoglycerate. The polypeptide is 2,3-bisphosphoglycerate-independent phosphoglycerate mutase (Mycoplasmopsis pulmonis (strain UAB CTIP) (Mycoplasma pulmonis)).